A 408-amino-acid polypeptide reads, in one-letter code: Two-pore potassium channel 5 (408 aa).

Disordered stretches follow at residues 1 to 29 and 58 to 82; these read MEPL…SASI and QSVQ…SQTR. Residues 15–29 are compositionally biased toward low complexity; sequence PIPENPSSSSSSASI. Residues 22 to 115 lie on the Stromal side of the membrane; that stretch reads SSSSSASITI…TKKPSPVSKS (94 aa). The span at 63-72 shows a compositional bias: acidic residues; that stretch reads DKEDQDSDSD. The chain crosses the membrane as a helical span at residues 116–136; that stretch reads IIRQAIFLLIVYLTLGVSIYS. Residues 152–171 constitute an intramembrane region (pore-forming); it reads DALYFCIVTMCTIGYGDIAP. A helical membrane pass occupies residues 178–198; the sequence is IFAVVFVLFGFGFLDILLSGV. Topologically, residues 199 to 248 are stromal; sequence VNYVLDLQESMILTGIQTRQHHQHHHHHRFSAKDYIIDFEKGRMRIRMKV. Residues 249–269 traverse the membrane as a helical segment; the sequence is CLALCVVVLCIGVGALVLHFV. An intramembrane region (pore-forming) is located at residues 276 to 295; sequence DSVYLSVMSVTTVGYGDRAF. The chain crosses the membrane as a helical span at residues 302–322; it reads LFAAVWLLVSTLAVARAFLYL. The Stromal portion of the chain corresponds to 323–408; sequence AEARIDRRHR…TLPDLLGDPL (86 aa). 2 EF-hand domains span residues 339–374 and 378–408; these read LNRE…EMGK and KDID…GDPL. Ca(2+) contacts are provided by Asp-352, Glu-363, Asp-391, Asn-393, Lys-397, and Asp-402.

It belongs to the two pore domain potassium channel (TC 1.A.1.7) family. As to quaternary structure, homodimer. As to expression, expressed in hydathodes and the vascular tissues of roots, stems, leaves and flowers.

Its subcellular location is the vacuole membrane. In terms of biological role, probable voltage-independent potassium-selective tonoplast ion channel. This chain is Two-pore potassium channel 5 (TPK5), found in Arabidopsis thaliana (Mouse-ear cress).